An 824-amino-acid polypeptide reads, in one-letter code: MEDDAPMNLCNEQFEEIEDSPIDDNDNESFYNADGDVELEEEEVHETPKNFKNGGRFKTNMTNPKVNDLTTIEEKNEDLRSAASSRSASRPASVMSDKSFSSQFEFQSGGENAIEEYTNQVFADENKADLLFPETSKFMNGASPPKDKHHSWEPSIHHYDKQPPPDIQTNSPVFGNLNHRKNKLIPQARAKPGANDNEIVERDNDENVPTTSDKSAFITSPMNSTNHDEKTSTPKRPTNRKIGQYQGPNFDLSSIYVGSPQHQNTSISTGQQMPTSSYSHAHSETMMTNQTINESMVRRVLNGNNKNQDLFAALEEARKRRAAQPSKPDFRINTTRTRVPIKPTSARHSGNVVSSTSNDNTTAASSKDLTTSRKAMETFRQNASMADATNSNTASMTSILSTISTARTDISRSSRNHGGGFSNTSVSTVIPANNGNVSLSHGRDGRDSVSSVRTMSRASSTSTVYAGSTFSGVSKPLRIHAKRVAFGCVAVGETLRVEVEVENISDRQCLVRASTDSTTPVYQILDNKLTMVDPKKSIKFQVSFSPSSVGRYQVIMSIEVPAQNFIHKIPMWGNGGIAKFVPTSPDLQQTINQSEYAMCTSCAKRISFKISNSAGTRDGFAMIKVFDSAMRQLPDGCVAFFPAPGFIVKKKSDKRVDIRIDSSYIDLHDENNFRTSSSLSTASTTSSFQRRILPGAKFFVHVVWGEETMRTRLRLLEVRTGQHQLIDGHDFTSFQFSDEEVLRAVPVGFPAIKPEDRDLFAASYRSFFINFFTSTTEFRAATSRKKKEICSNDDSTLLETTAFRNQTFVNDVTIVPNTRFSNRK.

2 stretches are compositionally biased toward acidic residues: residues 16–27 and 35–44; these read EIEDSPIDDNDN and GDVELEEEEV. The disordered stretch occupies residues 16-98; the sequence is EIEDSPIDDN…SRPASVMSDK (83 aa). The segment covering 59 to 70 has biased composition (polar residues); the sequence is TNMTNPKVNDLT. Low complexity predominate over residues 81–98; it reads SAASSRSASRPASVMSDK. The stretch at 111–131 forms a coiled coil; the sequence is ENAIEEYTNQVFADENKADLL. Residues 189 to 252 are disordered; sequence RAKPGANDNE…GQYQGPNFDL (64 aa). Over residues 207 to 225 the composition is skewed to polar residues; that stretch reads NVPTTSDKSAFITSPMNST. Residues 304–324 are a coiled coil; sequence NNKNQDLFAALEEARKRRAAQ. Disordered regions lie at residues 342 to 372 and 433 to 455; these read KPTS…LTTS and NNGN…VRTM. Low complexity predominate over residues 349 to 366; it reads SGNVVSSTSNDNTTAASS.

As to quaternary structure, interacts with sas-7 (via C-terminus); may be recruited to centrioles by sas-7.

It localises to the cytoplasm. The protein resides in the cytoskeleton. Its subcellular location is the microtubule organizing center. It is found in the centrosome. The protein localises to the centriole. Functionally, required both for centrosome duplication and maturation. Required for pericentriolar material (PCM) recruitment. This is Spindle-defective protein 2 from Caenorhabditis elegans.